The primary structure comprises 303 residues: MIKQRTLKNEIRATGVGLHTGQKVYLTLRPAPIDAGIVFRRVDLSPAVDIPAHAENVGDTTLSTTLVNGDVRVSTVEHLMSAMAGLGIDNAIVEVSADEVPIMDGSAGPFVFLIQSAGIQEQNAPKKFIRIKKKVVVKDGEKEAAFYPFNGFKVSFGIDFDHPVFKGRKLDATIDFSSTSFVKEISRARTFGFMHEIEYLRSKGLVKGGSLDNAVVVDKYRIMNEDGLRYDDEFVKHKVLDAIGDLYLLGTSLIGEYRAYKSGHGLNNQVLRELMKREDAWELVTFDEEETAPISYIKPLLAV.

3 residues coordinate Zn(2+): H78, H237, and D241. The active-site Proton donor is H264.

This sequence belongs to the LpxC family. Zn(2+) is required as a cofactor.

It carries out the reaction a UDP-3-O-[(3R)-3-hydroxyacyl]-N-acetyl-alpha-D-glucosamine + H2O = a UDP-3-O-[(3R)-3-hydroxyacyl]-alpha-D-glucosamine + acetate. It functions in the pathway glycolipid biosynthesis; lipid IV(A) biosynthesis; lipid IV(A) from (3R)-3-hydroxytetradecanoyl-[acyl-carrier-protein] and UDP-N-acetyl-alpha-D-glucosamine: step 2/6. Functionally, catalyzes the hydrolysis of UDP-3-O-myristoyl-N-acetylglucosamine to form UDP-3-O-myristoylglucosamine and acetate, the committed step in lipid A biosynthesis. This is UDP-3-O-acyl-N-acetylglucosamine deacetylase from Teredinibacter turnerae (strain ATCC 39867 / T7901).